We begin with the raw amino-acid sequence, 161 residues long: 3-isopropylmalate dehydratase small subunit (161 aa).

The protein belongs to the LeuD family. LeuD type 2 subfamily. As to quaternary structure, heterodimer of LeuC and LeuD.

The enzyme catalyses (2R,3S)-3-isopropylmalate = (2S)-2-isopropylmalate. Its pathway is amino-acid biosynthesis; L-leucine biosynthesis; L-leucine from 3-methyl-2-oxobutanoate: step 2/4. Functionally, catalyzes the isomerization between 2-isopropylmalate and 3-isopropylmalate, via the formation of 2-isopropylmaleate. This Pyrobaculum calidifontis (strain DSM 21063 / JCM 11548 / VA1) protein is 3-isopropylmalate dehydratase small subunit.